Here is a 332-residue protein sequence, read N- to C-terminus: Glycerol-3-phosphate dehydrogenase [NAD(P)+] (332 aa).

4 residues coordinate NADPH: S11, F12, K32, and K106. Sn-glycerol 3-phosphate contacts are provided by K106, G137, and S139. A141 contributes to the NADPH binding site. Sn-glycerol 3-phosphate contacts are provided by K192, D245, S255, R256, and N257. Catalysis depends on K192, which acts as the Proton acceptor. R256 is an NADPH binding site. NADPH is bound by residues V280 and E282.

Belongs to the NAD-dependent glycerol-3-phosphate dehydrogenase family.

Its subcellular location is the cytoplasm. The enzyme catalyses sn-glycerol 3-phosphate + NAD(+) = dihydroxyacetone phosphate + NADH + H(+). The catalysed reaction is sn-glycerol 3-phosphate + NADP(+) = dihydroxyacetone phosphate + NADPH + H(+). Its pathway is membrane lipid metabolism; glycerophospholipid metabolism. In terms of biological role, catalyzes the reduction of the glycolytic intermediate dihydroxyacetone phosphate (DHAP) to sn-glycerol 3-phosphate (G3P), the key precursor for phospholipid synthesis. The polypeptide is Glycerol-3-phosphate dehydrogenase [NAD(P)+] (Staphylococcus epidermidis (strain ATCC 12228 / FDA PCI 1200)).